A 305-amino-acid polypeptide reads, in one-letter code: Uridylate-specific endoribonuclease D (305 aa).

Positions 1-17 (MKVYFVFLCLLPSLISG) are cleaved as a signal peptide. The EndoU domain maps to 33-305 (SNAEIQSLAE…RYVASSYPNI (273 aa)). Residues His-182, His-197, and Lys-240 contribute to the active site. A glycan (N-linked (GlcNAc...) asparagine) is linked at Asn-288.

It belongs to the ENDOU family. As to quaternary structure, monomer. It depends on Mn(2+) as a cofactor.

Its subcellular location is the secreted. The enzyme catalyses ribonucleotidyl-uridine-RNA = a 5'-end dephospho-uridine-RNA + a 3'-end 2',3'-cyclophospho-ribonucleotide-RNA. In terms of biological role, endoribonuclease that cleaves single-stranded RNAs at 5' of uridylates and releases a product with a 2',3'-cyclic phosphate at the 3'-end. The polypeptide is Uridylate-specific endoribonuclease D (endou-d) (Xenopus laevis (African clawed frog)).